The primary structure comprises 185 residues: Probable gluconokinase (185 aa).

Residue 11–18 coordinates ATP; it reads GVSGSGKS.

The protein belongs to the gluconokinase GntK/GntV family.

The enzyme catalyses D-gluconate + ATP = 6-phospho-D-gluconate + ADP + H(+). The protein operates within carbohydrate acid metabolism; D-gluconate degradation. The protein is Probable gluconokinase (Idnk) of Rattus norvegicus (Rat).